Here is an 868-residue protein sequence, read N- to C-terminus: MASPASVAGGGEDSNGCSSLIDPLLVSRTSSIGGAERKAAGGGGGGAKGKHWAAADKGERRAAKECGGEDGRRPLLFRSYRVKGSLLHPYRALIFARLIAVLLFFGWRIRHNNSDIMWFWTMSVAGDVWFGFSWLLNQLPKFNPVKTIPDLTALRQYCDLADGSYRLPGIDVFVTTADPIDEPVLYTMNCVLSILAADYPVDRSACYLSDDSGALILYEALVETAKFATLWVPFCRKHCIEPRSPESYFELEAPSYTGSAQEEFKNDSRIVHLEYDEFKVRLEALPETIRKRSDVYNSMKTDQGAPNATWMANGTQWPGTWIEPIENHRKGHHAGIVKVVLDHPIRGHNLSLKDSTGNNLNFNATDVRIPMLVYVSRGKNPNYDHNKKAGALNAQLRASALLSNAQFIINFDCDHYINNSQALRAAICFMLDQREGDNTAFVQFPQRFDNVDPKDRYGNHNRVFFDGTMLALNGLQGPSYLGTGCMFRRLALYGIDPPHWRQDNITPESSKFGNSILLLESVLEALNQDRFATPSPVNDIFVNELEMVVSASFDKETDWGKGVGYIYDIATEDIVTGFRIHGQGWRSMYCTMEHDAFCGTAPINLTERLHQIVRWSGGSLEMFFSHNNPLIGGRRLQPLQRVSYLNMTIYPVTSLFILLYAISPVMWLIPDEVYIQRPFTRYVVYLLMIILMIHMIGWLEIKWAGITWLDYWRNEQFFMIGSTSAYPTAVLHMVVNLLTKKGIHFRVTSKQTTADTNDKFADLYEMRWVPMLIPTMVVLVANIGAIGVAIGKMAVYMGVWTIAQKRHAIMGLLFNMWVMFLLYPFALAIMGRWAKRPIILVVLLPIIFVIVALVYVATHILLANIIPF.

Residues 36–68 form a disordered region; it reads ERKAAGGGGGGAKGKHWAAADKGERRAAKECGG. Positions 53–68 are enriched in basic and acidic residues; it reads AAADKGERRAAKECGG. Transmembrane regions (helical) follow at residues 86 to 106 and 116 to 136; these read LLHP…LFFG and IMWF…SWLL. Asp-211 is a catalytic residue. Substrate is bound by residues Asp-412 and Asp-414. Asp-573 is a catalytic residue. 6 consecutive transmembrane segments (helical) span residues 649-669, 686-706, 717-737, 771-791, 809-829, and 837-857; these read IYPV…MWLI, LLMI…WAGI, FFMI…VVNL, MLIP…VAIG, IMGL…ALAI, and PIIL…VYVA.

This sequence belongs to the glycosyltransferase 2 family. Plant cellulose synthase-like F subfamily.

It is found in the golgi apparatus membrane. Functionally, may catalyze both beta-1,3 and beta-1,4 glycosidic linkage on beta-D-glucan. Essential for (1,3;1,4)-beta-D-glucans synthesis in grasses and cereals (Poaceae). The mixed-linked glucans (which are not present in walls of dicotyledons or most other monocotyledonous plants) are particularly important constituents of the walls of the starchy endosperm and aleurone cells of cereal grains such as oats, wheat, rice and barley. They can account for up to 70% by weight of the wall. In Oryza sativa subsp. indica (Rice), this protein is Probable mixed-linked glucan synthase 3 (CSLF3).